A 116-amino-acid chain; its full sequence is Ribosome-binding factor A (116 aa).

The protein belongs to the RbfA family. Monomer. Binds 30S ribosomal subunits, but not 50S ribosomal subunits or 70S ribosomes.

The protein localises to the cytoplasm. Functionally, one of several proteins that assist in the late maturation steps of the functional core of the 30S ribosomal subunit. Associates with free 30S ribosomal subunits (but not with 30S subunits that are part of 70S ribosomes or polysomes). Required for efficient processing of 16S rRNA. May interact with the 5'-terminal helix region of 16S rRNA. This chain is Ribosome-binding factor A, found in Streptococcus pneumoniae (strain ATCC 700669 / Spain 23F-1).